Here is a 463-residue protein sequence, read N- to C-terminus: Bifunctional protein HldE (463 aa).

The segment at 1 to 313 (MTGPMAVRTD…RALAALPDTD (313 aa)) is ribokinase. Asp-258 is a catalytic residue. The segment at 331–463 (AAGGCFDLLH…LLARAAEGAR (133 aa)) is cytidylyltransferase.

The protein in the N-terminal section; belongs to the carbohydrate kinase PfkB family. It in the C-terminal section; belongs to the cytidylyltransferase family. As to quaternary structure, homodimer.

It catalyses the reaction D-glycero-beta-D-manno-heptose 7-phosphate + ATP = D-glycero-beta-D-manno-heptose 1,7-bisphosphate + ADP + H(+). The catalysed reaction is D-glycero-beta-D-manno-heptose 1-phosphate + ATP + H(+) = ADP-D-glycero-beta-D-manno-heptose + diphosphate. It participates in nucleotide-sugar biosynthesis; ADP-L-glycero-beta-D-manno-heptose biosynthesis; ADP-L-glycero-beta-D-manno-heptose from D-glycero-beta-D-manno-heptose 7-phosphate: step 1/4. Its pathway is nucleotide-sugar biosynthesis; ADP-L-glycero-beta-D-manno-heptose biosynthesis; ADP-L-glycero-beta-D-manno-heptose from D-glycero-beta-D-manno-heptose 7-phosphate: step 3/4. Functionally, catalyzes the phosphorylation of D-glycero-D-manno-heptose 7-phosphate at the C-1 position to selectively form D-glycero-beta-D-manno-heptose-1,7-bisphosphate. In terms of biological role, catalyzes the ADP transfer from ATP to D-glycero-beta-D-manno-heptose 1-phosphate, yielding ADP-D-glycero-beta-D-manno-heptose. This chain is Bifunctional protein HldE, found in Streptomyces coelicolor (strain ATCC BAA-471 / A3(2) / M145).